The following is a 324-amino-acid chain: NAC domain-containing protein 21/22 (324 aa).

Residues 19-171 enclose the NAC domain; sequence LPPGFRFHPK…DWVLCRVFHK (153 aa). Positions 120–137 match the Bipartite nuclear localization signal motif; that stretch reads RKTLVFYQGRAPRGRKTD.

Dimer. Interacts with SINAT5. In terms of processing, ubiquitinated. The interaction with SINAT5 mediate its proteasome-dependent degradation. Predominantly expressed in the root tip and in lateral root initiation sites. Also detected in expanding cotyledon, and in leaf primordia.

The protein localises to the nucleus. Functionally, transcriptional activator that mediates auxin signaling to promote lateral root development. Activates the expression of two downstream auxin-responsive genes, DBP and AIR3. In Arabidopsis thaliana (Mouse-ear cress), this protein is NAC domain-containing protein 21/22 (NAC021).